The primary structure comprises 1216 residues: ATP-dependent helicase/nuclease subunit A (1216 aa).

In terms of domain architecture, UvrD-like helicase ATP-binding spans 26–488 (QKKTAEQIEA…ILLKANFRSS (463 aa)). 47 to 54 (ASAGSGKT) is an ATP binding site. The region spanning 515–802 (KHQLVFANTK…ELMTIHKSKG (288 aa)) is the UvrD-like helicase C-terminal domain.

It belongs to the helicase family. AddA subfamily. Heterodimer of AddA and AddB/RexB. Requires Mg(2+) as cofactor.

It carries out the reaction Couples ATP hydrolysis with the unwinding of duplex DNA by translocating in the 3'-5' direction.. The enzyme catalyses ATP + H2O = ADP + phosphate + H(+). Functionally, the heterodimer acts as both an ATP-dependent DNA helicase and an ATP-dependent, dual-direction single-stranded exonuclease. Recognizes the chi site generating a DNA molecule suitable for the initiation of homologous recombination. The AddA nuclease domain is required for chi fragment generation; this subunit has the helicase and 3' -&gt; 5' nuclease activities. The chain is ATP-dependent helicase/nuclease subunit A from Streptococcus pneumoniae (strain ATCC 700669 / Spain 23F-1).